Reading from the N-terminus, the 95-residue chain is Gas vesicle protein S (95 aa).

This sequence belongs to the gas vesicle GvpA family.

The protein localises to the gas vesicle. In terms of biological role, probably a minor component of the gas vesicle. It is not clear what function gas vesicles perform in soil bacteria. Its function is as follows. When a minimal gvp locus (gvpA2-gvpR-gvpN-gvpF-gvpG-gvpL-gvpS-gvpK-gvpJ-gvpT-gvpU, called pNL29) is expressed in E.coli gas vesicles are made. The chain is Gas vesicle protein S from Priestia megaterium (Bacillus megaterium).